The sequence spans 194 residues: MPRLILASTSPWRRALLEKLTIPFECAAPDVDETPMPGEAPRQLVLRLAQAKAQSLAARFPNHLIIGSDQICVLDGEITGKPLTEEKARQQLAKASGNIVTFYTGLALYNSASGQLQTEVEPFDVHFRHLSEAEIDDYVRKEHPLHCAGSFKSEGLGIALFERLEGRDPNTLIGLPLIALCQMLRREGFNPLQQ.

D69 acts as the Proton acceptor in catalysis.

This sequence belongs to the Maf family. YceF subfamily. A divalent metal cation serves as cofactor.

Its subcellular location is the cytoplasm. It carries out the reaction N(7)-methyl-GTP + H2O = N(7)-methyl-GMP + diphosphate + H(+). Its function is as follows. Nucleoside triphosphate pyrophosphatase that hydrolyzes 7-methyl-GTP (m(7)GTP). May have a dual role in cell division arrest and in preventing the incorporation of modified nucleotides into cellular nucleic acids. In Salmonella choleraesuis (strain SC-B67), this protein is 7-methyl-GTP pyrophosphatase (yceF1).